Reading from the N-terminus, the 456-residue chain is Methylenetetrahydrofolate--tRNA-(uracil-5-)-methyltransferase TrmFO (456 aa).

Residue 11 to 16 (GGGLAG) coordinates FAD.

This sequence belongs to the MnmG family. TrmFO subfamily. FAD is required as a cofactor.

The protein localises to the cytoplasm. It carries out the reaction uridine(54) in tRNA + (6R)-5,10-methylene-5,6,7,8-tetrahydrofolate + NADH + H(+) = 5-methyluridine(54) in tRNA + (6S)-5,6,7,8-tetrahydrofolate + NAD(+). It catalyses the reaction uridine(54) in tRNA + (6R)-5,10-methylene-5,6,7,8-tetrahydrofolate + NADPH + H(+) = 5-methyluridine(54) in tRNA + (6S)-5,6,7,8-tetrahydrofolate + NADP(+). Catalyzes the folate-dependent formation of 5-methyl-uridine at position 54 (M-5-U54) in all tRNAs. This Synechocystis sp. (strain ATCC 27184 / PCC 6803 / Kazusa) protein is Methylenetetrahydrofolate--tRNA-(uracil-5-)-methyltransferase TrmFO.